The sequence spans 120 residues: Large ribosomal subunit protein bL20 (120 aa).

This sequence belongs to the bacterial ribosomal protein bL20 family.

In terms of biological role, binds directly to 23S ribosomal RNA and is necessary for the in vitro assembly process of the 50S ribosomal subunit. It is not involved in the protein synthesizing functions of that subunit. This is Large ribosomal subunit protein bL20 from Methylobacillus flagellatus (strain ATCC 51484 / DSM 6875 / VKM B-1610 / KT).